Reading from the N-terminus, the 219-residue chain is Probable nicotinate-nucleotide adenylyltransferase (219 aa).

It belongs to the NadD family.

The enzyme catalyses nicotinate beta-D-ribonucleotide + ATP + H(+) = deamido-NAD(+) + diphosphate. It participates in cofactor biosynthesis; NAD(+) biosynthesis; deamido-NAD(+) from nicotinate D-ribonucleotide: step 1/1. Catalyzes the reversible adenylation of nicotinate mononucleotide (NaMN) to nicotinic acid adenine dinucleotide (NaAD). The chain is Probable nicotinate-nucleotide adenylyltransferase from Cronobacter sakazakii (strain ATCC BAA-894) (Enterobacter sakazakii).